Consider the following 173-residue polypeptide: Co-chaperone protein HscB homolog (173 aa).

Residues 3–75 (NPFSLFNLPV…IARATAIIEI (73 aa)) enclose the J domain.

It belongs to the HscB family. Interacts with HscA and stimulates its ATPase activity.

Functionally, co-chaperone involved in the maturation of iron-sulfur cluster-containing proteins. Seems to help targeting proteins to be folded toward HscA. In Haemophilus ducreyi (strain 35000HP / ATCC 700724), this protein is Co-chaperone protein HscB homolog.